We begin with the raw amino-acid sequence, 160 residues long: Nucleotide-binding protein VV1636 (160 aa).

The protein belongs to the YajQ family.

Nucleotide-binding protein. The protein is Nucleotide-binding protein VV1636 of Vibrio vulnificus (strain YJ016).